The primary structure comprises 173 residues: Large ribosomal subunit protein uL10 (173 aa).

This sequence belongs to the universal ribosomal protein uL10 family. As to quaternary structure, part of the ribosomal stalk of the 50S ribosomal subunit. The N-terminus interacts with L11 and the large rRNA to form the base of the stalk. The C-terminus forms an elongated spine to which L12 dimers bind in a sequential fashion forming a multimeric L10(L12)X complex.

Its function is as follows. Forms part of the ribosomal stalk, playing a central role in the interaction of the ribosome with GTP-bound translation factors. This Cupriavidus pinatubonensis (strain JMP 134 / LMG 1197) (Cupriavidus necator (strain JMP 134)) protein is Large ribosomal subunit protein uL10.